A 438-amino-acid chain; its full sequence is MTAAPDARTTAVMSAPLAEVDPDIAELLAKELGRQRDTLEMIASENFVPRAVLQAQGSVLTNKYAEGLPGRRYYGGCEHVDVVENLARDRAKALFGAEFANVQPHSGAQANAAVLHALMSPGERLLGLDLANGGHLTHGMRLNFSGKLYENGFYGVDPATHLIDMDAVRATALEFRPKVIIAGWSAYPRVLDFAAFRSIADEVGAKLLVDMAHFAGLVAAGLHPSPVPHADVVSTTVHKTLGGGRSGLIVGKQQYAKAINSAVFPGQQGGPLMHVIAGKAVALKIAATPEFADRQRRTLSGARIIADRLMAPDVAKAGVSVVSGGTDVHLVLVDLRDSPLDGQAAEDLLHEVGITVNRNAVPNDPRPPMVTSGLRIGTPALATRGFGDTEFTEVADIIATALATGSSVDVSALKDRATRLARAFPLYDGLEEWSLVGR.

(6S)-5,6,7,8-tetrahydrofolate contacts are provided by residues leucine 130 and 134 to 136 (GHL). Lysine 239 is modified (N6-(pyridoxal phosphate)lysine).

Belongs to the SHMT family. In terms of assembly, homodimer. The cofactor is pyridoxal 5'-phosphate.

The protein resides in the cytoplasm. The enzyme catalyses (6R)-5,10-methylene-5,6,7,8-tetrahydrofolate + glycine + H2O = (6S)-5,6,7,8-tetrahydrofolate + L-serine. Its pathway is one-carbon metabolism; tetrahydrofolate interconversion. The protein operates within amino-acid biosynthesis; glycine biosynthesis; glycine from L-serine: step 1/1. Catalyzes the reversible interconversion of serine and glycine with tetrahydrofolate (THF) serving as the one-carbon carrier. This reaction serves as the major source of one-carbon groups required for the biosynthesis of purines, thymidylate, methionine, and other important biomolecules. Also exhibits THF-independent aldolase activity toward beta-hydroxyamino acids, producing glycine and aldehydes, via a retro-aldol mechanism. Thus, is able to catalyze the cleavage of L-allo-threonine. This is Serine hydroxymethyltransferase 1 from Mycobacterium tuberculosis (strain ATCC 25618 / H37Rv).